The sequence spans 444 residues: Zinc finger CCCH domain-containing protein 63 (444 aa).

C3H1-type zinc fingers lie at residues 56–84 (RIGE…HPAD), 101–129 (RIGQ…HPRE), and 147–175 (RPNE…HPQP). A disordered region spans residues 251 to 276 (GSSSSDDQQRTAGGAQYYTGSRHSET). C3H1-type zinc fingers lie at residues 309-337 (RPDQ…HPKE) and 355-383 (RPGE…HPMG). Residues 405–444 (PVPAHSEVSPDNVSGRSRRITHSDSQQIPSGERGTEREAS) are disordered.

The protein is Zinc finger CCCH domain-containing protein 63 of Oryza sativa subsp. japonica (Rice).